A 172-amino-acid polypeptide reads, in one-letter code: MILSGKEIKNRLNKDIFIEPFSDNQLNPNSYNLRLHNELLVYENNVLDMKKENKAKKITIPEEGLLLEPGKLYLGRTIEHTRTEKLVPMLEGRSSVGRLGLFIHITAGFGDIGFSGFWTLEIFCVQPIRIYPNIEICQIYYHNIEGEYEKYTSGKYQNNTGVQPSLLFKDFE.

DCTP contacts are provided by residues 93-98, aspartate 111, 119-121, glutamine 138, and tyrosine 151; these read RSSVGR and TLE. Glutamate 121 serves as the catalytic Proton donor/acceptor.

The protein belongs to the dCTP deaminase family. As to quaternary structure, homotrimer.

The enzyme catalyses dCTP + 2 H2O = dUMP + NH4(+) + diphosphate. It participates in pyrimidine metabolism; dUMP biosynthesis; dUMP from dCTP: step 1/1. Bifunctional enzyme that catalyzes both the deamination of dCTP to dUTP and the hydrolysis of dUTP to dUMP without releasing the toxic dUTP intermediate. In Hathewaya histolytica (Clostridium histolyticum), this protein is dCTP deaminase, dUMP-forming.